The chain runs to 679 residues: MSEPRQILVTSALPYANGSIHLGHMLEYIQTDMWVRFQKLRGNQCIYVCADDAHGSAIMLRAEKEGITPEQLIANVQAEHSSDFADFLVDFDNFHSTHSDENRELSSLIYSRLREAGHIATRSVTQYFDPEKGMFLADRFIKGTCPKCAAEDQYGDNCEKCGATYAPTELKNPKSAISGATPVLRDSQHFFFKLPDFQAMLQQWTRSGTLQDAVANKLAEWLDSGLQEWDISRDAPYFGFEIPGEPGKYFYVWLDAPIGYMASFKNLCARRPELDFDAFWHEGSKAELYHFIGKDIVNFHALFWPAMLEGAGFRKPTAVNVHGYLTVNGAKMSKSRGTFIKARTYLDHLQPEYLRYYYAAKLGRGVDDLDLNLEDFVQKVNSDLVGKVVNIASRCAGFIHKGNEGVMVGGDAAPELTEAFLAAAPSIAEAYEARDFGRAMREIMALADRANAWIADKAPWSLAKQEGKQDEVQAICAQGINLFRQLVIFLKPVLPVLAADAEAFLNVAPLTWNDHLTRLENHQLNPFKALMSRIEPAKVEAMVAASKEDLLAAEAKAPAGNGELAKDPLSAEIEFDTFAAVDLRVALIVKAEAVAGADKLLQLTLDIGDERRNVFSGIKSAYPDPSKLEGRLTMMVANLKPRKMRFGVSEGMVMAAGPGGEEIYLLSPDSGAKPGQRIK.

Residues 14-24 carry the 'HIGH' region motif; that stretch reads PYANGSIHLGH. Zn(2+)-binding residues include Cys-145, Cys-148, Cys-158, and Cys-161. The 'KMSKS' region signature appears at 331–335; sequence KMSKS. Lys-334 serves as a coordination point for ATP. The region spanning 577-679 is the tRNA-binding domain; the sequence is TFAAVDLRVA…SGAKPGQRIK (103 aa).

Belongs to the class-I aminoacyl-tRNA synthetase family. MetG type 1 subfamily. In terms of assembly, homodimer. The cofactor is Zn(2+).

Its subcellular location is the cytoplasm. The enzyme catalyses tRNA(Met) + L-methionine + ATP = L-methionyl-tRNA(Met) + AMP + diphosphate. In terms of biological role, is required not only for elongation of protein synthesis but also for the initiation of all mRNA translation through initiator tRNA(fMet) aminoacylation. The polypeptide is Methionine--tRNA ligase (Pseudomonas putida (strain ATCC 47054 / DSM 6125 / CFBP 8728 / NCIMB 11950 / KT2440)).